We begin with the raw amino-acid sequence, 122 residues long: Small ribosomal subunit protein uS13 (122 aa).

Positions 94–122 are disordered; sequence LSLPVRGQRTKTNSRTRKGKRKTVAGKKK. Residues 101-122 are compositionally biased toward basic residues; the sequence is QRTKTNSRTRKGKRKTVAGKKK.

This sequence belongs to the universal ribosomal protein uS13 family. As to quaternary structure, part of the 30S ribosomal subunit. Forms a loose heterodimer with protein S19. Forms two bridges to the 50S subunit in the 70S ribosome.

Functionally, located at the top of the head of the 30S subunit, it contacts several helices of the 16S rRNA. In the 70S ribosome it contacts the 23S rRNA (bridge B1a) and protein L5 of the 50S subunit (bridge B1b), connecting the 2 subunits; these bridges are implicated in subunit movement. Contacts the tRNAs in the A and P-sites. This chain is Small ribosomal subunit protein uS13, found in Chlamydia trachomatis serovar A (strain ATCC VR-571B / DSM 19440 / HAR-13).